Reading from the N-terminus, the 476-residue chain is Aspartyl/glutamyl-tRNA(Asn/Gln) amidotransferase subunit B 1 (476 aa).

This sequence belongs to the GatB/GatE family. GatB subfamily. Heterotrimer of A, B and C subunits.

It carries out the reaction L-glutamyl-tRNA(Gln) + L-glutamine + ATP + H2O = L-glutaminyl-tRNA(Gln) + L-glutamate + ADP + phosphate + H(+). The catalysed reaction is L-aspartyl-tRNA(Asn) + L-glutamine + ATP + H2O = L-asparaginyl-tRNA(Asn) + L-glutamate + ADP + phosphate + 2 H(+). Allows the formation of correctly charged Asn-tRNA(Asn) or Gln-tRNA(Gln) through the transamidation of misacylated Asp-tRNA(Asn) or Glu-tRNA(Gln) in organisms which lack either or both of asparaginyl-tRNA or glutaminyl-tRNA synthetases. The reaction takes place in the presence of glutamine and ATP through an activated phospho-Asp-tRNA(Asn) or phospho-Glu-tRNA(Gln). This Clostridium acetobutylicum (strain ATCC 824 / DSM 792 / JCM 1419 / IAM 19013 / LMG 5710 / NBRC 13948 / NRRL B-527 / VKM B-1787 / 2291 / W) protein is Aspartyl/glutamyl-tRNA(Asn/Gln) amidotransferase subunit B 1 (gatB1).